Reading from the N-terminus, the 285-residue chain is Bifunctional protein FolD (285 aa).

NADP(+) contacts are provided by residues 165 to 167 and S190; that span reads GRS.

Belongs to the tetrahydrofolate dehydrogenase/cyclohydrolase family. As to quaternary structure, homodimer.

It catalyses the reaction (6R)-5,10-methylene-5,6,7,8-tetrahydrofolate + NADP(+) = (6R)-5,10-methenyltetrahydrofolate + NADPH. The catalysed reaction is (6R)-5,10-methenyltetrahydrofolate + H2O = (6R)-10-formyltetrahydrofolate + H(+). The protein operates within one-carbon metabolism; tetrahydrofolate interconversion. Functionally, catalyzes the oxidation of 5,10-methylenetetrahydrofolate to 5,10-methenyltetrahydrofolate and then the hydrolysis of 5,10-methenyltetrahydrofolate to 10-formyltetrahydrofolate. This chain is Bifunctional protein FolD, found in Streptococcus pneumoniae (strain ATCC BAA-255 / R6).